The following is a 79-amino-acid chain: uncharacterized protein (79 aa).

It localises to the mitochondrion. This is an uncharacterized protein from Oenothera berteroana (Bertero's evening primrose).